The chain runs to 92 residues: Small ribosomal subunit protein uS19 (92 aa).

A disordered region spans residues 72 to 92; it reads GEFSPTRSFRGHAGAKNKGKK. The span at 80–92 shows a compositional bias: basic residues; it reads FRGHAGAKNKGKK.

Belongs to the universal ribosomal protein uS19 family.

Protein S19 forms a complex with S13 that binds strongly to the 16S ribosomal RNA. The chain is Small ribosomal subunit protein uS19 from Flavobacterium johnsoniae (strain ATCC 17061 / DSM 2064 / JCM 8514 / BCRC 14874 / CCUG 350202 / NBRC 14942 / NCIMB 11054 / UW101) (Cytophaga johnsonae).